The following is a 236-amino-acid chain: 2-C-methyl-D-erythritol 4-phosphate cytidylyltransferase (236 aa).

The protein belongs to the IspD/TarI cytidylyltransferase family. IspD subfamily. Homodimer.

The enzyme catalyses 2-C-methyl-D-erythritol 4-phosphate + CTP + H(+) = 4-CDP-2-C-methyl-D-erythritol + diphosphate. The protein operates within isoprenoid biosynthesis; isopentenyl diphosphate biosynthesis via DXP pathway; isopentenyl diphosphate from 1-deoxy-D-xylulose 5-phosphate: step 2/6. Its function is as follows. Catalyzes the formation of 4-diphosphocytidyl-2-C-methyl-D-erythritol from CTP and 2-C-methyl-D-erythritol 4-phosphate (MEP). In Enterobacter sp. (strain 638), this protein is 2-C-methyl-D-erythritol 4-phosphate cytidylyltransferase.